The following is a 351-amino-acid chain: Nicotinate-nucleotide--dimethylbenzimidazole phosphoribosyltransferase (351 aa).

The Proton acceptor role is filled by E319.

This sequence belongs to the CobT family.

The catalysed reaction is 5,6-dimethylbenzimidazole + nicotinate beta-D-ribonucleotide = alpha-ribazole 5'-phosphate + nicotinate + H(+). It functions in the pathway nucleoside biosynthesis; alpha-ribazole biosynthesis; alpha-ribazole from 5,6-dimethylbenzimidazole: step 1/2. Its function is as follows. Catalyzes the synthesis of alpha-ribazole-5'-phosphate from nicotinate mononucleotide (NAMN) and 5,6-dimethylbenzimidazole (DMB). The sequence is that of Nicotinate-nucleotide--dimethylbenzimidazole phosphoribosyltransferase from Desulforamulus reducens (strain ATCC BAA-1160 / DSM 100696 / MI-1) (Desulfotomaculum reducens).